Here is a 51-residue protein sequence, read N- to C-terminus: Ovomucoid (51 aa).

Residues 1-49 (VDCSEYPQPACTTERRPVCGSNNKTYSNKCNFCNAVVKSNGTLTVSHFG) enclose the Kazal-like domain. Disulfide bonds link C3–C33, C11–C30, and C19–C51. A glycan (N-linked (GlcNAc...) asparagine) is linked at N40.

Its subcellular location is the secreted. The chain is Ovomucoid from Polyplectron napoleonis (Palawan peacock-pheasant).